A 204-amino-acid polypeptide reads, in one-letter code: dTTP/UTP pyrophosphatase (204 aa).

Asp-68 acts as the Proton acceptor in catalysis.

It belongs to the Maf family. YhdE subfamily. A divalent metal cation serves as cofactor.

Its subcellular location is the cytoplasm. The catalysed reaction is dTTP + H2O = dTMP + diphosphate + H(+). It carries out the reaction UTP + H2O = UMP + diphosphate + H(+). Nucleoside triphosphate pyrophosphatase that hydrolyzes dTTP and UTP. May have a dual role in cell division arrest and in preventing the incorporation of modified nucleotides into cellular nucleic acids. This Thermotoga maritima (strain ATCC 43589 / DSM 3109 / JCM 10099 / NBRC 100826 / MSB8) protein is dTTP/UTP pyrophosphatase.